The following is a 588-amino-acid chain: Calicin (588 aa).

The BTB domain maps to 28–98 (WDIALTVDHH…FYSGKVVISE (71 aa)). Ser-149 is subject to Phosphoserine. 6 Kelch repeats span residues 280 to 327 (SVVI…SAGR), 328 to 375 (YIYI…TCGG), 377 to 423 (VYSV…TRGD), 425 to 475 (NLYI…SFHQ), 476 to 525 (DNIL…VGDN), and 526 to 580 (KVFV…LAKL).

Interacts with CYLC1; the interaction may be relevant for proper acrosome attachment to the nuclear envelope. As to expression, expressed in testis and in spermatozoa (at protein level).

The protein localises to the cytoplasm. Its subcellular location is the cytoskeleton. The protein resides in the perinuclear theca. It is found in the calyx. In terms of biological role, required for both nuclear and acrosomal shaping during spermiogenesis. This Bos taurus (Bovine) protein is Calicin (CCIN).